Here is a 72-residue protein sequence, read N- to C-terminus: Translation initiation factor IF-1 2 (72 aa).

The region spanning 1 to 72 is the S1-like domain; it reads MAKEDAIEVD…KRGRITYRMK (72 aa).

The protein belongs to the IF-1 family. Component of the 30S ribosomal translation pre-initiation complex which assembles on the 30S ribosome in the order IF-2 and IF-3, IF-1 and N-formylmethionyl-tRNA(fMet); mRNA recruitment can occur at any time during PIC assembly.

The protein resides in the cytoplasm. Functionally, one of the essential components for the initiation of protein synthesis. Stabilizes the binding of IF-2 and IF-3 on the 30S subunit to which N-formylmethionyl-tRNA(fMet) subsequently binds. Helps modulate mRNA selection, yielding the 30S pre-initiation complex (PIC). Upon addition of the 50S ribosomal subunit IF-1, IF-2 and IF-3 are released leaving the mature 70S translation initiation complex. The sequence is that of Translation initiation factor IF-1 2 from Nitratidesulfovibrio vulgaris (strain DP4) (Desulfovibrio vulgaris).